Reading from the N-terminus, the 327-residue chain is Melanoma-associated antigen B18 (327 aa).

Residues 1 to 19 (MPRGQKSKLRAREKRRQAR) are compositionally biased toward basic residues. Residues 1–85 (MPRGQKSKLR…SSDDSEDTED (85 aa)) form a disordered region. The segment covering 46–70 (MPTSPNMPMGEQSTFSHSYTSTSDQ) has biased composition (polar residues). Residues 91–289 (INHKVVLLVQ…DSFPTLYEAA (199 aa)) enclose the MAGE domain.

Interacts with LNX1. In terms of tissue distribution, expressed in testis, stomach, large intestine, small intestine, spleen, lymph node, bone marrow lymphocytes and blood T-lymphocytes. Not detected in brain, heart, lung, liver or kidney (at protein level).

The protein resides in the cytoplasm. May enhance ubiquitin ligase activity of RING-type zinc finger-containing E3 ubiquitin-protein ligases. Proposed to act through recruitment and/or stabilization of the Ubl-conjugating enzyme (E2) at the E3:substrate complex. This chain is Melanoma-associated antigen B18, found in Mus musculus (Mouse).